The sequence spans 941 residues: Coiled-coil domain-containing protein 40 (941 aa).

Basic and acidic residues predominate over residues 1–14 (MEGRQEDQMNRQEE). The segment at 1-31 (MEGRQEDQMNRQEEVEQSNNYDRSVDHARTG) is disordered. Coiled-coil stretches lie at residues 130 to 154 (VQEMLARLQASLEVCQETNSEAAAQ), 210 to 430 (DIKA…QIMN), 548 to 572 (LEIHAATLSKELEEVGAKIKECQQL), 609 to 765 (IRRE…AKSK), 814 to 856 (AQLE…EIKE), and 895 to 915 (HKQEERLKMVSLTLQRLAQEY).

This sequence belongs to the CCDC40 family. As to expression, expressed in tissues that contain motile cilia, including Kupffer's vesicle, the floorplate, the pronephric tubules and the otic vesicle.

It localises to the cytoplasm. The protein localises to the cell projection. It is found in the cilium. Functionally, required for assembly of dynein regulatory complex (DRC) and inner dynein arm (IDA) complexes, which are responsible for ciliary beat regulation, thereby playing a central role in motility in cilia and flagella. Probably acts together with ccdc39 to form a molecular ruler that determines the 96 nanometer (nm) repeat length and arrangements of components in cilia and flagella. The sequence is that of Coiled-coil domain-containing protein 40 (ccdc40) from Danio rerio (Zebrafish).